Consider the following 416-residue polypeptide: MSTNTVPSSPPNQTPPAASGIATSHDHTKFNNPIRLPISISLTINDTPNNNSNNNSVSNGLGILPSRTATSLVVANNGSANGNVGATAAAAATVETNTAPAVNTTKSIRHFIYPPNQVNQTEFSLDIHLPPNTSLPERIDQSTLKRRMDKHGLFSIRLTPFIDTSSTSVANQGLFFDPIIRTAGAGSQIIIGRYTERVREAISKIPDQYHPVVFKSKVISRTHGCFKVDDQGNWFLKDVKSSSGTFLNHQRLSSASTTSKDYLLHDGDIIQLGMDFRGGTEEIYRCVKMKIELNKSWKLKANAFNKEALSRIKNLQKLTTGLEQEDCSICLNKIKPCQAIFISPCAHSWHFHCVRRLVIMNYPQFMCPNCRTNCDLETTLESESESEFENEDEDEPDIEMDIDMEINNNLGVRLVD.

Positions 1–30 (MSTNTVPSSPPNQTPPAASGIATSHDHTKF) are disordered. Glycyl lysine isopeptide (Lys-Gly) (interchain with G-Cter in ubiquitin) cross-links involve residues Lys-150, Lys-204, Lys-217, Lys-237, Lys-240, Lys-260, Lys-300, Lys-306, Lys-313, and Lys-317. Residues 189-252 (IIIGRYTERV…SGTFLNHQRL (64 aa)) form the FHA domain. The RING-type zinc-finger motif lies at 327–371 (CSICLNKIKPCQAIFISPCAHSWHFHCVRRLVIMNYPQFMCPNCR).

It belongs to the DMA1 family. As to quaternary structure, interacts with CDC123. Interacts with PCL1. In terms of processing, UBC4-dependent autoubiquitination occurs at Lys-150, Lys-204, Lys-217, Lys-237, Lys-240, Lys-260, Lys-300, Lys-306, Lys-313 and Lys-317. UBC4-dependent autoubiquitination is responsible for DMA2 turnover. UBC13/MMS2-dependent autoubiquitination occurs at Lys-237 and Lys-306. Lys-204 and Lys-306 are also ubiquitinated in trans by DMA2 E3 ligase in association with UBC4.

Its subcellular location is the cytoplasm. It catalyses the reaction S-ubiquitinyl-[E2 ubiquitin-conjugating enzyme]-L-cysteine + [acceptor protein]-L-lysine = [E2 ubiquitin-conjugating enzyme]-L-cysteine + N(6)-ubiquitinyl-[acceptor protein]-L-lysine.. In terms of biological role, E3 ubiquitin-protein ligase which functions in cell cycle retarding in conjunction with the UBC4 and UBC13/MMS2 complex, 2 E2 ubiquitin conjugating enzymes. Involved in nutritional control of the cell cycle. Targets the G1 cyclin PCL1 for destruction. Required for proper spindle positioning, likely regulating septin ring deposition at the bud neck. In Saccharomyces cerevisiae (strain ATCC 204508 / S288c) (Baker's yeast), this protein is E3 ubiquitin-protein ligase DMA1.